The following is a 126-amino-acid chain: Protein ApaG (126 aa).

The ApaG domain maps to 2 to 126; sequence DISTPCIKCQ…FRLAIPNILN (125 aa).

The polypeptide is Protein ApaG (Vibrio atlanticus (strain LGP32) (Vibrio splendidus (strain Mel32))).